The primary structure comprises 323 residues: tRNA U34 carboxymethyltransferase (323 aa).

Residues K91, W105, K110, G130, 181–182, M196, Y200, and R315 each bind carboxy-S-adenosyl-L-methionine; that span reads IE.

The protein belongs to the class I-like SAM-binding methyltransferase superfamily. CmoB family. In terms of assembly, homotetramer.

It catalyses the reaction carboxy-S-adenosyl-L-methionine + 5-hydroxyuridine(34) in tRNA = 5-carboxymethoxyuridine(34) in tRNA + S-adenosyl-L-homocysteine + H(+). Its function is as follows. Catalyzes carboxymethyl transfer from carboxy-S-adenosyl-L-methionine (Cx-SAM) to 5-hydroxyuridine (ho5U) to form 5-carboxymethoxyuridine (cmo5U) at position 34 in tRNAs. This chain is tRNA U34 carboxymethyltransferase, found in Yersinia pseudotuberculosis serotype O:3 (strain YPIII).